The following is a 201-amino-acid chain: Ribonuclease HII (201 aa).

An RNase H type-2 domain is found at 12-201 (GIVCGIDEVG…FAPVAQYMLF (190 aa)). Residues Asp-18, Glu-19, and Asp-113 each contribute to the a divalent metal cation site.

Belongs to the RNase HII family. The cofactor is Mn(2+). Requires Mg(2+) as cofactor.

The protein localises to the cytoplasm. The catalysed reaction is Endonucleolytic cleavage to 5'-phosphomonoester.. Functionally, endonuclease that specifically degrades the RNA of RNA-DNA hybrids. In Paramagnetospirillum magneticum (strain ATCC 700264 / AMB-1) (Magnetospirillum magneticum), this protein is Ribonuclease HII (rnhB).